Consider the following 147-residue polypeptide: 6-pyruvoyl tetrahydrobiopterin synthase (147 aa).

H26 serves as a coordination point for Zn(2+). The active-site Proton acceptor is C45. Zn(2+) contacts are provided by H51 and H53. Active-site charge relay system residues include H92 and E136.

It belongs to the PTPS family. Homohexamer formed of two homotrimers in a head to head fashion. Requires Zn(2+) as cofactor.

The catalysed reaction is 7,8-dihydroneopterin 3'-triphosphate = 6-pyruvoyl-5,6,7,8-tetrahydropterin + triphosphate + H(+). The protein operates within cofactor biosynthesis; tetrahydrobiopterin biosynthesis; tetrahydrobiopterin from 7,8-dihydroneopterin triphosphate: step 1/3. Its function is as follows. Involved in the biosynthesis of tetrahydrobiopterin, an essential cofactor of aromatic amino acid hydroxylases. Catalyzes the transformation of 7,8-dihydroneopterin triphosphate into 6-pyruvoyl tetrahydropterin. The polypeptide is 6-pyruvoyl tetrahydrobiopterin synthase (pts) (Poecilia reticulata (Guppy)).